The sequence spans 200 residues: Mediator of RNA polymerase II transcription subunit 22 (200 aa).

The stretch at 93 to 122 (SVNEAIDQRNQQLRALQEECDRKLITLRDE) forms a coiled coil. The disordered stretch occupies residues 167–200 (SAPLLASPETGAGPLQSAAPVHSHGGGPGPTEHT). Positions 190–200 (HGGGPGPTEHT) are enriched in gly residues.

It belongs to the Mediator complex subunit 22 family. As to quaternary structure, component of the Mediator complex, which is composed of MED1, MED4, MED6, MED7, MED8, MED9, MED10, MED11, MED12, MED13, MED13L, MED14, MED15, MED16, MED17, MED18, MED19, MED20, MED21, MED22, MED23, MED24, MED25, MED26, MED27, MED29, MED30, MED31, CCNC, CDK8 and CDC2L6/CDK11. The MED12, MED13, CCNC and CDK8 subunits form a distinct module termed the CDK8 module. Mediator containing the CDK8 module is less active than Mediator lacking this module in supporting transcriptional activation. Individual preparations of the Mediator complex lacking one or more distinct subunits have been variously termed ARC, CRSP, DRIP, PC2, SMCC and TRAP.

It localises to the nucleus. Component of the Mediator complex, a coactivator involved in the regulated transcription of nearly all RNA polymerase II-dependent genes. Mediator functions as a bridge to convey information from gene-specific regulatory proteins to the basal RNA polymerase II transcription machinery. Mediator is recruited to promoters by direct interactions with regulatory proteins and serves as a scaffold for the assembly of a functional preinitiation complex with RNA polymerase II and the general transcription factors. The protein is Mediator of RNA polymerase II transcription subunit 22 (Med22) of Rattus norvegicus (Rat).